The chain runs to 154 residues: 3-dehydroquinate dehydratase 2 (154 aa).

Residue Tyr23 is the Proton acceptor of the active site. Positions 79, 85, and 92 each coordinate substrate. His105 (proton donor) is an active-site residue. Residues 106–107 (IS) and Arg116 contribute to the substrate site.

The protein belongs to the type-II 3-dehydroquinase family. As to quaternary structure, homododecamer.

The catalysed reaction is 3-dehydroquinate = 3-dehydroshikimate + H2O. It functions in the pathway metabolic intermediate biosynthesis; chorismate biosynthesis; chorismate from D-erythrose 4-phosphate and phosphoenolpyruvate: step 3/7. In terms of biological role, catalyzes a trans-dehydration via an enolate intermediate. This Ralstonia nicotianae (strain ATCC BAA-1114 / GMI1000) (Ralstonia solanacearum) protein is 3-dehydroquinate dehydratase 2 (aroQ2).